Here is a 255-residue protein sequence, read N- to C-terminus: uncharacterized protein (255 aa).

Belongs to the methyltransferase superfamily.

This is an uncharacterized protein from Mycolicibacterium gilvum (strain PYR-GCK) (Mycobacterium gilvum (strain PYR-GCK)).